Consider the following 620-residue polypeptide: Protein CNGC15b (620 aa).

6 helical membrane-spanning segments follow: residues 73 to 93 (IFLVACLISLFVDPLFFYLPI), 102 to 122 (IGIAVEVFLIIIRSIADVFYV), 161 to 181 (GFFLDFIAALPLPQVLIWIVI), 198 to 218 (FIIIIQYLPRLFLIFPLSSQI), 237 to 257 (LMLYMLASHVLGACWYLLSIE), and 356 to 376 (GEIMFAIVIATLGLVLFALLI). A nucleoside 3',5'-cyclic phosphate is bound at residue 462-559 (LFDAMDERML…SSTRTVKAIS (98 aa)).

This sequence belongs to the cyclic nucleotide-gated cation channel (TC 1.A.1.5) family. As to quaternary structure, interacts (via N-terminus) with DMI1 (via c-terminus). The Nod factor has no effect on this interaction, implying that the complex is maintained after activation. In terms of tissue distribution, expressed in roots, stems, leaves, flowers and pods.

It localises to the nucleus membrane. Cyclic nucleotide-gated channel involved in the establishment of both rhizobial and mycorrhizal associations. Required for full activation of nuclear-localized Ca(2+) oscillations by Nod and Myc factors. Simultaneous activation of the K(+)-permeable channel DMI1 and the Ca(2+) channel CNGC15 can give rise to sustained Ca(2+) oscillations. May function during fertilization in both female and male gametophytic Ca(2+) signaling. This chain is Protein CNGC15b, found in Medicago truncatula (Barrel medic).